A 360-amino-acid polypeptide reads, in one-letter code: Mannonate dehydratase (360 aa).

The protein belongs to the mannonate dehydratase family. It depends on Fe(2+) as a cofactor. The cofactor is Mn(2+).

The catalysed reaction is D-mannonate = 2-dehydro-3-deoxy-D-gluconate + H2O. It functions in the pathway carbohydrate metabolism; pentose and glucuronate interconversion. Functionally, catalyzes the dehydration of D-mannonate. This chain is Mannonate dehydratase (uxuA), found in Thermotoga neapolitana.